Consider the following 175-residue polypeptide: Large ribosomal subunit protein uL6 (175 aa).

This sequence belongs to the universal ribosomal protein uL6 family. In terms of assembly, part of the 50S ribosomal subunit.

Functionally, this protein binds to the 23S rRNA, and is important in its secondary structure. It is located near the subunit interface in the base of the L7/L12 stalk, and near the tRNA binding site of the peptidyltransferase center. The sequence is that of Large ribosomal subunit protein uL6 from Xylella fastidiosa (strain 9a5c).